The sequence spans 347 residues: GMP reductase (347 aa).

108–131 provides a ligand contact to NADP(+); it reads ADFAKTAQILALNPALNFVCIDVA. 2 residues coordinate K(+): G181 and G183. The Thioimidate intermediate role is filled by C186. 216–239 serves as a coordination point for NADP(+); sequence IVSDGGCTMPGDVAKAFGGGADFV.

Belongs to the IMPDH/GMPR family. GuaC type 1 subfamily. In terms of assembly, homotetramer.

The enzyme catalyses IMP + NH4(+) + NADP(+) = GMP + NADPH + 2 H(+). Catalyzes the irreversible NADPH-dependent deamination of GMP to IMP. It functions in the conversion of nucleobase, nucleoside and nucleotide derivatives of G to A nucleotides, and in maintaining the intracellular balance of A and G nucleotides. This Salmonella arizonae (strain ATCC BAA-731 / CDC346-86 / RSK2980) protein is GMP reductase.